Reading from the N-terminus, the 2156-residue chain is Oxygen-regulated protein 1 (2156 aa).

Polar residues predominate over residues 1 to 19; it reads MSDTPSTGFSIIHPTSSEG. The tract at residues 1-25 is disordered; the sequence is MSDTPSTGFSIIHPTSSEGQVPPPR. 2 consecutive Doublecortin domains span residues 36–118 and 154–233; these read KRIS…VDLD and RSLV…GNYD. Disordered stretches follow at residues 353-375, 666-686, 1438-1458, and 1590-1621; these read VSKT…RTES, SSVA…SRYQ, DMEE…MTSS, and DWSD…TQEK.

As to quaternary structure, interacts (via the doublecortin domains) with microtubules. Interacts with RP1L1. Interacts with MAK. Expressed in retina. Not expressed in heart, brain, placenta, lung, liver, skeletal muscle, kidney, spleen and pancreas.

The protein localises to the cytoplasm. The protein resides in the cytoskeleton. It localises to the cilium axoneme. Its subcellular location is the cell projection. It is found in the cilium. The protein localises to the photoreceptor outer segment. In terms of biological role, microtubule-associated protein regulating the stability and length of the microtubule-based axoneme of photoreceptors. Required for the differentiation of photoreceptor cells, it plays a role in the organization of the outer segment of rod and cone photoreceptors ensuring the correct orientation and higher-order stacking of outer segment disks along the photoreceptor axoneme. This chain is Oxygen-regulated protein 1 (RP1), found in Homo sapiens (Human).